A 117-amino-acid polypeptide reads, in one-letter code: Large ribosomal subunit protein bL20 (117 aa).

This sequence belongs to the bacterial ribosomal protein bL20 family.

Its function is as follows. Binds directly to 23S ribosomal RNA and is necessary for the in vitro assembly process of the 50S ribosomal subunit. It is not involved in the protein synthesizing functions of that subunit. In Ruminiclostridium cellulolyticum (strain ATCC 35319 / DSM 5812 / JCM 6584 / H10) (Clostridium cellulolyticum), this protein is Large ribosomal subunit protein bL20.